Here is a 179-residue protein sequence, read N- to C-terminus: Large ribosomal subunit protein uL5 (179 aa).

This sequence belongs to the universal ribosomal protein uL5 family. As to quaternary structure, part of the 50S ribosomal subunit; part of the 5S rRNA/L5/L18/L25 subcomplex. Contacts the 5S rRNA and the P site tRNA. Forms a bridge to the 30S subunit in the 70S ribosome.

In terms of biological role, this is one of the proteins that bind and probably mediate the attachment of the 5S RNA into the large ribosomal subunit, where it forms part of the central protuberance. In the 70S ribosome it contacts protein S13 of the 30S subunit (bridge B1b), connecting the 2 subunits; this bridge is implicated in subunit movement. Contacts the P site tRNA; the 5S rRNA and some of its associated proteins might help stabilize positioning of ribosome-bound tRNAs. This Pseudomonas aeruginosa (strain LESB58) protein is Large ribosomal subunit protein uL5.